Consider the following 71-residue polypeptide: Large ribosomal subunit protein bL31 (71 aa).

The Zn(2+) site is built by Cys-16, Cys-18, Cys-36, and Cys-39.

The protein belongs to the bacterial ribosomal protein bL31 family. Type A subfamily. Part of the 50S ribosomal subunit. The cofactor is Zn(2+).

In terms of biological role, binds the 23S rRNA. The protein is Large ribosomal subunit protein bL31 of Thermus thermophilus (strain ATCC BAA-163 / DSM 7039 / HB27).